The chain runs to 456 residues: Probable multidrug resistance protein NorM (456 aa).

The next 12 helical transmembrane spans lie at 13–34 (QFLT…MTFF), 54–76 (SSFW…PIIA), 95–117 (LYIA…PTIL), 132–154 (HFLN…RSFI), 161–183 (RVTM…CFIF), 193–215 (GAGS…VILI), 244–266 (IGVP…TILM), 286–308 (LLYA…ETGA), 321–343 (GMAA…RDII), 358–380 (MHFL…VLGA), 387–409 (VTVT…GYGL), and 414–436 (LGPF…ILSI).

The protein belongs to the multi antimicrobial extrusion (MATE) (TC 2.A.66.1) family.

The protein resides in the cell membrane. Multidrug efflux pump. The protein is Probable multidrug resistance protein NorM (norM) of Listeria monocytogenes serotype 4b (strain F2365).